A 70-amino-acid polypeptide reads, in one-letter code: Beta-defensin 107A (70 aa).

Residues 1–26 (MPGAMKIFFFIFAALILLAQIFQART) form the signal peptide. 2 disulfides stabilise this stretch: Cys-41–Cys-55 and Cys-45–Cys-64.

Belongs to the beta-defensin family.

It is found in the secreted. Its function is as follows. Has antibacterial activity. The polypeptide is Beta-defensin 107A (DEFB107A) (Pan troglodytes (Chimpanzee)).